A 128-amino-acid chain; its full sequence is Small ribosomal subunit protein bS6 (128 aa).

Belongs to the bacterial ribosomal protein bS6 family.

Binds together with bS18 to 16S ribosomal RNA. The protein is Small ribosomal subunit protein bS6 of Leifsonia xyli subsp. xyli (strain CTCB07).